Here is a 366-residue protein sequence, read N- to C-terminus: UDP-N-acetylglucosamine--N-acetylmuramyl-(pentapeptide) pyrophosphoryl-undecaprenol N-acetylglucosamine transferase (366 aa).

Residues 14 to 16 (TGG), N125, R168, S196, and Q297 each bind UDP-N-acetyl-alpha-D-glucosamine.

This sequence belongs to the glycosyltransferase 28 family. MurG subfamily.

The protein localises to the cell inner membrane. It catalyses the reaction di-trans,octa-cis-undecaprenyl diphospho-N-acetyl-alpha-D-muramoyl-L-alanyl-D-glutamyl-meso-2,6-diaminopimeloyl-D-alanyl-D-alanine + UDP-N-acetyl-alpha-D-glucosamine = di-trans,octa-cis-undecaprenyl diphospho-[N-acetyl-alpha-D-glucosaminyl-(1-&gt;4)]-N-acetyl-alpha-D-muramoyl-L-alanyl-D-glutamyl-meso-2,6-diaminopimeloyl-D-alanyl-D-alanine + UDP + H(+). It functions in the pathway cell wall biogenesis; peptidoglycan biosynthesis. Its function is as follows. Cell wall formation. Catalyzes the transfer of a GlcNAc subunit on undecaprenyl-pyrophosphoryl-MurNAc-pentapeptide (lipid intermediate I) to form undecaprenyl-pyrophosphoryl-MurNAc-(pentapeptide)GlcNAc (lipid intermediate II). The protein is UDP-N-acetylglucosamine--N-acetylmuramyl-(pentapeptide) pyrophosphoryl-undecaprenol N-acetylglucosamine transferase of Rhodopseudomonas palustris (strain ATCC BAA-98 / CGA009).